Here is a 91-residue protein sequence, read N- to C-terminus: Uteroglobin (91 aa).

A signal peptide spans 1–21; that stretch reads MKLAVTLTLVTLALCCSSASA.

The protein belongs to the secretoglobin family. In terms of assembly, antiparallel homodimer; disulfide-linked. Interaction with LMBR1L has been observed in PubMed:16423471, but not in PubMed:23964685. Club cells (nonciliated cells of the surface epithelium of the pulmonary airways).

Its subcellular location is the secreted. In terms of biological role, binds phosphatidylcholine, phosphatidylinositol, polychlorinated biphenyls (PCB) and weakly progesterone, potent inhibitor of phospholipase A2. The chain is Uteroglobin (SCGB1A1) from Homo sapiens (Human).